A 763-amino-acid polypeptide reads, in one-letter code: Sphingoid long-chain bases kinase 1 (763 aa).

Residues 34–81 (TGGSQQSSPIVFPEKRNKKVKASSRRGEVTNDPQVKPKPDEHRIDIGG) are disordered. Basic and acidic residues predominate over residues 58 to 81 (RRGEVTNDPQVKPKPDEHRIDIGG). A DAGKc domain is found at 245-384 (KSAPKMLVIL…TDVFAVEWIH (140 aa)). Residues 255–257 (NPR) and Thr-287 contribute to the ATP site. 313 to 316 (GGDG) serves as a coordination point for substrate. Catalysis depends on Asp-315, which acts as the Proton donor/acceptor. Residues Glu-320, 345-347 (GSD), and Arg-418 contribute to the ATP site. The interval 561-603 (MGLTSVQDPPTRCSWGNTGGQDREDISSTVSDPGPIWDAGPKW) is disordered. 733-735 (DGE) is a binding site for ATP.

As to expression, expressed in roots, stems, leaves and at higher levels in flowers.

Involved in the production of sphingolipid metabolites. Active on sphingosine, phytosphingosine (PHS, 4-hydroxysphinganine), D-erythro-dihydrosphingosine, D-erythro-sphingosine and trans-4, trans-8-sphingadienine, an LCB found exclusively in plants, but not on N-acetyl-dihydrosphingosine (C2-dihydroceramide) and D-threo-dihydrosphingosine. In Arabidopsis thaliana (Mouse-ear cress), this protein is Sphingoid long-chain bases kinase 1 (LCBK1).